The following is a 196-amino-acid chain: Probable malonic semialdehyde reductase RutE (196 aa).

It belongs to the nitroreductase family. HadB/RutE subfamily. Requires FMN as cofactor.

The enzyme catalyses 3-hydroxypropanoate + NADP(+) = 3-oxopropanoate + NADPH + H(+). Functionally, may reduce toxic product malonic semialdehyde to 3-hydroxypropionic acid, which is excreted. The chain is Probable malonic semialdehyde reductase RutE from Escherichia coli O157:H7.